The following is a 288-amino-acid chain: Bifunctional protein FolD (288 aa).

Residues 166–168 and I232 contribute to the NADP(+) site; that span reads GAS.

The protein belongs to the tetrahydrofolate dehydrogenase/cyclohydrolase family. Homodimer.

The enzyme catalyses (6R)-5,10-methylene-5,6,7,8-tetrahydrofolate + NADP(+) = (6R)-5,10-methenyltetrahydrofolate + NADPH. The catalysed reaction is (6R)-5,10-methenyltetrahydrofolate + H2O = (6R)-10-formyltetrahydrofolate + H(+). It participates in one-carbon metabolism; tetrahydrofolate interconversion. Its function is as follows. Catalyzes the oxidation of 5,10-methylenetetrahydrofolate to 5,10-methenyltetrahydrofolate and then the hydrolysis of 5,10-methenyltetrahydrofolate to 10-formyltetrahydrofolate. This Salmonella heidelberg (strain SL476) protein is Bifunctional protein FolD.